The chain runs to 836 residues: MEFLKSGIKTVLGSTEPGQQPSAAETVEKLVDRVYSSTLLEDRRDACRALKALSRKYRIEVGAQGMPPLVQVLQNDGQDAEIISYALDTLCNVVTSEEFDEEADNPTVSVNVGEQFTEMFIKTPEHVTLVMGYLDEYDFRVRRAAIQLITSLISNKTRELQDLILVSPMGVSKLMDLLTDSREVIRNDVLLLLIELTKGNSNIQKIVAFENAFDRLFEIVREEGCSDGGIVVEDCLILLLNLLKNNSSNQQFFKEGSYIQRLSPMFELSQDAEEVGWSPQKVSNFHCLLQVVRALVTPSNQQQVVAACQRVMQKSRLLHALCEILMSSGVPADILTETINAVAEVVRGDRDNQDELGRVMAPSSPPRPAIVVLLMSMINEKQLLALRCAVLYCFECFLYRNADGQRAVVQTLLPSSASDVSALSTGQLLCTGLFSTDALANWFSAVALMHSLVENVALKEELLRVLLATPGGQKPITLLEQCTNLMQQERYRLQSKVGLLMLLSLWLAHCPGAVKALLETQGTMAYLTAQLCSNEHDEREFLVQGMCAFLMGLCIQFNDNSLPGQKREDISQLIIKRIGQESFCSKLAEVSRHEAYSRACKQAQIRAKSAGELLLDFEYCKLYKGLEALIAKLVSGFDVDGIELTELTLSSEASALVSQYKGIIRGMDAQIQALQQSSKELEQENAELKEKLGEEQSLKAQLLDQNTLLKAQLGASTGQVQSAQGAEATPPNEEELNAARYQANMYFAENIRLTKELETLRQQLSAEKQSADAAQDSLAAMQKDQEDLLELLADQEAKLTRYEEAGSTNTLPTSNVAPSVPAAGGGSPIPSGTASR.

A disordered region spans residues 1 to 22; sequence MEFLKSGIKTVLGSTEPGQQPS. The span at 12–22 shows a compositional bias: polar residues; sequence LGSTEPGQQPS. 11 ARM repeats span residues 24–64, 65–124, 126–166, 169–210, 211–256, 316–359, 368–413, 424–463, 477–518, 523–577, and 579–636; these read AETV…VGAQ, GMPP…IKTP, HVTL…LILV, MGVS…VAFE, NAFD…FKEG, RLLH…LGRV, PAIV…QTLL, STGQ…EELL, TLLE…KALL, TMAY…IIKR, and GQES…LVSG. Coiled coils occupy residues 663–707 and 744–806; these read IIRG…DQNT and NMYF…EEAG. Residues 803–836 are disordered; that stretch reads EEAGSTNTLPTSNVAPSVPAAGGGSPIPSGTASR. The segment covering 806-816 has biased composition (polar residues); the sequence is GSTNTLPTSNV. Over residues 817-836 the composition is skewed to low complexity; sequence APSVPAAGGGSPIPSGTASR.

This sequence belongs to the VDP/USO1/EDE1 family.

Its subcellular location is the cytoplasm. It localises to the golgi apparatus. The protein resides in the golgi stack. The protein localises to the golgi stack membrane. It is found in the endoplasmic reticulum. Its subcellular location is the endoplasmic reticulum membrane. Functionally, essential for maintaining the architecture of the Golgi stacks and for normal organization of the transitional endoplasmic reticulum (tER). Required for both the formation of the Golgi stacks and the maintenance of the individual cisternae. This Drosophila melanogaster (Fruit fly) protein is General vesicular transport factor p115.